A 603-amino-acid polypeptide reads, in one-letter code: NADH-ubiquinone oxidoreductase chain 5 (603 aa).

A run of 14 helical transmembrane segments spans residues 4–24 (YTSIMLMTLASLALPIFATLV), 36–56 (VKTTMMYAFITSLIPTTLYIF), 87–107 (MMFIPIALFITWSIMEFSLWY), 122–142 (LIFLITMLILITANNLFQLFI), 171–191 (AVLYNRIGDIGLILAMVWFLL), 211–233 (LPLMGLLLAAVGKSAQFGLHPWL), 241–261 (TPVSALLHSSTMVVAGVFLLI), 272–292 (LTQNLTLCLGAITTLFMAMCA), 301–320 (IVAFSTSSQLGLMMITIGIN), 325–347 (AFLHICTHAFFKAMLFICSGSII), 370–390 (STSLIIGNLALTGIPFLTGFY), 406–422 (AWALSITLIATSLTSAY), 488–508 (LLALYMTALGFIITLDLTLMT), and 583–603 (MIKLYFLSFLIPLALALLLMV).

The protein belongs to the complex I subunit 5 family. Core subunit of respiratory chain NADH dehydrogenase (Complex I) which is composed of 45 different subunits.

The protein resides in the mitochondrion inner membrane. The catalysed reaction is a ubiquinone + NADH + 5 H(+)(in) = a ubiquinol + NAD(+) + 4 H(+)(out). Its function is as follows. Core subunit of the mitochondrial membrane respiratory chain NADH dehydrogenase (Complex I) which catalyzes electron transfer from NADH through the respiratory chain, using ubiquinone as an electron acceptor. Essential for the catalytic activity and assembly of complex I. This Papio hamadryas (Hamadryas baboon) protein is NADH-ubiquinone oxidoreductase chain 5 (MT-ND5).